The primary structure comprises 322 residues: Undecaprenyl-phosphate 4-deoxy-4-formamido-L-arabinose transferase (322 aa).

Residues 1–235 lie on the Cytoplasmic side of the membrane; it reads MFEIHPVKKV…TCLTTTPLRM (235 aa). A helical membrane pass occupies residues 236 to 256; that stretch reads LSLLGSIIAIGGFSIAVLLVI. The Periplasmic portion of the chain corresponds to 257–269; sequence LRLTFGPQWAAEG. A helical transmembrane segment spans residues 270 to 290; sequence VFMLFAVLFTFIGAQFIGMGL. The Cytoplasmic segment spans residues 291–322; that stretch reads LGEYIGRIYTDVRARPRYFVQQVIRPSSKENE.

It belongs to the glycosyltransferase 2 family.

It is found in the cell inner membrane. The enzyme catalyses UDP-4-deoxy-4-formamido-beta-L-arabinose + di-trans,octa-cis-undecaprenyl phosphate = 4-deoxy-4-formamido-alpha-L-arabinopyranosyl di-trans,octa-cis-undecaprenyl phosphate + UDP. It participates in glycolipid biosynthesis; 4-amino-4-deoxy-alpha-L-arabinose undecaprenyl phosphate biosynthesis; 4-amino-4-deoxy-alpha-L-arabinose undecaprenyl phosphate from UDP-4-deoxy-4-formamido-beta-L-arabinose and undecaprenyl phosphate: step 1/2. It functions in the pathway bacterial outer membrane biogenesis; lipopolysaccharide biosynthesis. In terms of biological role, catalyzes the transfer of 4-deoxy-4-formamido-L-arabinose from UDP to undecaprenyl phosphate. The modified arabinose is attached to lipid A and is required for resistance to polymyxin and cationic antimicrobial peptides. In Escherichia coli O139:H28 (strain E24377A / ETEC), this protein is Undecaprenyl-phosphate 4-deoxy-4-formamido-L-arabinose transferase.